The following is a 214-amino-acid chain: Large ribosomal subunit protein uL3 (214 aa).

Residues 131-155 (GAQRTSHGNSRSHRVPGSIGMAQDP) are disordered. Gln-153 is modified (N5-methylglutamine).

It belongs to the universal ribosomal protein uL3 family. As to quaternary structure, part of the 50S ribosomal subunit. Forms a cluster with proteins L14 and L19. Methylated by PrmB.

Functionally, one of the primary rRNA binding proteins, it binds directly near the 3'-end of the 23S rRNA, where it nucleates assembly of the 50S subunit. The chain is Large ribosomal subunit protein uL3 from Neisseria meningitidis serogroup C (strain 053442).